The chain runs to 351 residues: Amylovoran biosynthesis glycosyltransferase AmsD (351 aa).

It belongs to the glycosyltransferase group 1 family. Glycosyltransferase 4 subfamily.

Its pathway is glycan metabolism; exopolysaccharide biosynthesis. Functionally, involved in the biosynthesis of amylovoran which functions as a virulence factor. May be involved in the formation of galactose alpha-1,6 linkages in amylovoran. The polypeptide is Amylovoran biosynthesis glycosyltransferase AmsD (amsD) (Erwinia amylovora (Fire blight bacteria)).